Reading from the N-terminus, the 618-residue chain is DNA mismatch repair protein MutL (618 aa).

Over residues 367–378 (EPTAAREPATPR) the composition is skewed to low complexity. Residues 367–402 (EPTAAREPATPRYSGGASGGNGGRQTAGGWPHAQPG) are disordered. A compositionally biased stretch (gly residues) spans 382–392 (GASGGNGGRQT).

It belongs to the DNA mismatch repair MutL/HexB family.

This protein is involved in the repair of mismatches in DNA. It is required for dam-dependent methyl-directed DNA mismatch repair. May act as a 'molecular matchmaker', a protein that promotes the formation of a stable complex between two or more DNA-binding proteins in an ATP-dependent manner without itself being part of a final effector complex. This Salmonella choleraesuis (strain SC-B67) protein is DNA mismatch repair protein MutL.